A 219-amino-acid chain; its full sequence is MSGSSGPQAQRGPCPFALLLLLLLGPSSVLAISFHLPVNSRKCLREEIHKDLLVTGAYEITDQSGGAGGLRTHLKITDSAGHILYSKEDATKGKFAFTTEDYDMFEVCFESKGTGRIPDQLVILDMKHGVEAKNYEEIAKVEKLKPLEVELRRLEDLSESIVNDFAYMKKREEEMRDTNESTNTRVLYFSIFSMFCLIGLATWQVFYLRRFFKAKKLIE.

Residues M1–A31 form the signal peptide. The required for interaction with STX17 stretch occupies residues M1–E142. Residues I32–R185 lie on the Lumenal side of the membrane. The 153-residue stretch at R41–S193 folds into the GOLD domain. A required for TMED10 and TMED2 cis-Golgi network localization region spans residues L147–T178. Residues R171 and R176 each carry the dimethylated arginine modification. An N-linked (GlcNAc...) asparagine glycan is attached at N179. A helical membrane pass occupies residues V186 to F206. An interaction with COPG1 region spans residues Q204–E219. At Y207–E219 the chain is on the cytoplasmic side. The interval Y207–E219 is interaction with ARF1 and IL1B. Residues F211–F212 carry the COPII vesicle coat-binding motif. Residues F211 to E219 carry the COPI vesicle coat-binding motif.

It belongs to the EMP24/GP25L family. In terms of assembly, predominantly dimeric and to a lesser extent monomeric in the ER. Monomer and dimer in ERGIC and cis-Golgi network. Forms homooligomer (via GOLD domain); the assembly is promoted by direct binding with leaderless cargos and may form a protein channel that facilitates cargo entry into the ERGIC. Forms heterooligomeric complexes with other members of the p24 family such as TMED2, TMED7 and TMED9. Interacts (via GOLD domain) with TMED2 (via GOLD domain); the complex is required for export of TMED10 from the ER to the cis-Golgi network; the complex is proposed to be involved in cis-Golgi network dynamics and / or biogenesis. Associates with the COPI vesicle coat subunits (coatomer). Tetramerization of the cytoplasmic domain at the Golgi membrane in vitro; the complex is proposed to interact with COPI coatomer and induce budding of the vesicles. Interacts with COPG1; the interaction involves TMED10 homodimer. Interacts with ARF1 (GDP-bound); the interaction probably involves a TMED10 oligomer. Interacts with SEC23A, SEC24B, SEC24C and SEC24D components of the coat protein complex II/COPII, indicative of an association of TMED10 with the COPII vesicle coat. Interacts with CD59. Interacts with MPPE1/PGAP5; the complex might recruit and sort GPI-anchored proteins to the ER-exit site, or the interaction might lead to recycling of PGAP5 between the ER and the Golgi. Interacts with F2LR1/PAR2. Interacts with KDELR2/ERD2; the interaction is disrupted by KDELR2 ligand. Found in a complex composed at least of SURF4, TMED2 and TMED10. Associates with the presenilin-dependent gamma-secretase complex. Interacts with STX17; the interaction is direct. Interacts with IL-1; the interaction is direct. Interacts with RAB21 (active GTP-bound form); the interaction is indirect and regulates TMED10 abundance and localization at the Golgi.

It localises to the endoplasmic reticulum membrane. The protein resides in the endoplasmic reticulum-Golgi intermediate compartment membrane. The protein localises to the golgi apparatus membrane. It is found in the golgi apparatus. Its subcellular location is the cis-Golgi network membrane. It localises to the trans-Golgi network membrane. The protein resides in the cytoplasmic vesicle. The protein localises to the secretory vesicle membrane. It is found in the cell membrane. Its subcellular location is the melanosome. Cargo receptor involved in protein vesicular trafficking and quality control in the endoplasmic reticulum (ER) and Golgi. The p24 protein family is a group of transmembrane proteins that bind coat protein complex I/COPI and coat protein complex II/COPII involved in vesicular trafficking between the membranes. Acts at the lumenal side for incorporation of secretory cargo molecules into transport vesicles and involved in vesicle coat formation at the cytoplasmic side. Mainly functions in the early secretory pathway and cycles between the ER, ER-Golgi intermediate compartment (ERGIC) and Golgi, mediating cargo transport through COPI and COPII-coated vesicles. In COPII vesicle-mediated anterograde transport, involved in the transport of GPI-anchored proteins by acting together with TMED2 as their cargo receptor; the function specifically implies SEC24C and SEC24D of the COPII vesicle coat and lipid raft-like microdomains of the ER. Recognizes GPI anchors structural remodeled in the ER by the GPI inositol-deacylase/PGAP1 and the metallophosphoesterase MPPE1/PGAP5. In COPI vesicle-mediated retrograde transport, involved in the biogenesis of COPI vesicles and vesicle coat recruitment. Involved in trafficking of amyloid beta A4 protein and soluble APP-beta release (independent from the modulation of gamma-secretase activity). Involved in the KDELR2-mediated retrograde transport of the toxin A subunit (CTX-A-K63)together with COPI and the COOH terminus of KDELR2. On Golgi membranes, acts as a primary receptor for ARF1-GDP, a GTP-binding protein involved in COPI-vesicle formation. Increases coatomer-dependent GTPase-activating activity of ARFGAP2 which mediates the hydrolysis of ARF1-bound GTP and therefore modulates protein trafficking from the Golgi apparatus. Involved in the exocytic trafficking of G protein-coupled receptors F2LR1/PAR2 (trypsin and tryspin-like enzyme receptor), OPRM1 (opioid receptor) and P2RY4 (UTD and UDP receptor) from the Golgi to the plasma membrane, thus contributing to receptor resensitization. In addition to its cargo receptor activity, may also act as a protein channel after oligomerization, facilitating the post-translational entry of leaderless cytoplasmic cargo into the ERGIC. Involved in the translocation into ERGIC, the vesicle entry and the secretion of leaderless cargos (lacking the secretion signal sequence), including the mature form of interleukin 1/IL-1 family members, the alpha-crystallin B chain HSPB5, the carbohydrate-binding proteins galectin-1/LGALS1 and galectin-3/LGALS3, the microtubule-associated protein Tau/MAPT, and the annexin A1/ANXA1; the translocation process is dependent on cargo protein unfolding and enhanced by chaperones HSP90AB1 and HSP90B1/GRP9. Could also associates with the presenilin-dependent gamma-secretase complex in order to regulate gamma-cleavages of the amyloid beta A4 protein to yield amyloid-beta 40/Abeta40. The protein is Transmembrane emp24 domain-containing protein 10 (TMED10) of Bos taurus (Bovine).